The following is a 61-amino-acid chain: Potassium channel toxin alpha-KTx 5.3 (61 aa).

The N-terminal stretch at 1 to 28 (MHNYYKIVLIMVAFFAVIITFSNIQVEG) is a signal peptide. 3 disulfides stabilise this stretch: Cys31/Cys49, Cys36/Cys54, and Cys40/Cys56. A [R/K]XCQ motif region spans residues 34 to 37 (KRCQ). His59 is modified (histidine amide).

The protein belongs to the short scorpion toxin superfamily. Potassium channel inhibitor family. Alpha-KTx 05 subfamily. As to expression, expressed by the venom gland.

Its subcellular location is the secreted. Its function is as follows. Blocks small conductance calcium-activated potassium channels (KCNN, SK). Has also been shown to weakly inhibit Kv11.1/KCNH2/ERG1, Kv1.2/KCNA2, Kv1.3/KCNA3 and Kv2.1/KCNB1 voltage-gated potassium channels. This chain is Potassium channel toxin alpha-KTx 5.3, found in Olivierus martensii (Manchurian scorpion).